A 216-amino-acid chain; its full sequence is Flagellar transcriptional regulator FlhC (216 aa).

The Zn(2+) site is built by C137, C140, C157, and C160.

It belongs to the FlhC family. In terms of assembly, heterohexamer composed of two FlhC and four FlhD subunits. Each FlhC binds a FlhD dimer, forming a heterotrimer, and a hexamer assembles by dimerization of two heterotrimers. Zn(2+) serves as cofactor.

The protein resides in the cytoplasm. Functionally, functions in complex with FlhD as a master transcriptional regulator that regulates transcription of several flagellar and non-flagellar operons by binding to their promoter region. Activates expression of class 2 flagellar genes, including fliA, which is a flagellum-specific sigma factor that turns on the class 3 genes. Also regulates genes whose products function in a variety of physiological pathways. The chain is Flagellar transcriptional regulator FlhC from Paraburkholderia atlantica.